A 393-amino-acid polypeptide reads, in one-letter code: 26S proteasome regulatory subunit RPN9 (393 aa).

A PCI domain is found at 187–355; it reads SFYYTSLLYL…ELVTISWVQP (169 aa).

This sequence belongs to the proteasome subunit S11 family.

Acts as a regulatory subunit of the 26S proteasome which is involved in the ATP-dependent degradation of ubiquitinated proteins. This Saccharomyces cerevisiae (strain ATCC 204508 / S288c) (Baker's yeast) protein is 26S proteasome regulatory subunit RPN9 (RPN9).